We begin with the raw amino-acid sequence, 1054 residues long: Translation initiation factor IF-2 (1054 aa).

4 disordered regions span residues D57–C213, D225–D248, S287–Q315, and D401–L436. A compositionally biased stretch (polar residues) spans Q92–P104. The segment covering E111–C213 has biased composition (low complexity). Positions D401–K418 are enriched in basic and acidic residues. In terms of domain architecture, tr-type G spans T552–T721. The segment at G561–T568 is G1. G561 to T568 contributes to the GTP binding site. The interval G586–H590 is G2. Positions D607–G610 are G3. Residues D607 to H611 and N661 to D664 contribute to the GTP site. Residues N661–D664 form a G4 region. The interval S697–K699 is G5.

The protein belongs to the TRAFAC class translation factor GTPase superfamily. Classic translation factor GTPase family. IF-2 subfamily.

Its subcellular location is the cytoplasm. In terms of biological role, one of the essential components for the initiation of protein synthesis. Protects formylmethionyl-tRNA from spontaneous hydrolysis and promotes its binding to the 30S ribosomal subunits. Also involved in the hydrolysis of GTP during the formation of the 70S ribosomal complex. The polypeptide is Translation initiation factor IF-2 (infB) (Stigmatella aurantiaca).